The primary structure comprises 377 residues: Leucine aminopeptidase A (377 aa).

An N-terminal signal peptide occupies residues Met-1 to Ala-18. A propeptide spanning residues Ile-19–Thr-79 is cleaved from the precursor. N-linked (GlcNAc...) asparagine glycosylation is present at Asn-87. 4 residues coordinate Zn(2+): His-176, Asp-195, Glu-234, and Asp-261. Residue Asn-288 is glycosylated (N-linked (GlcNAc...) asparagine). A disulfide bridge links Cys-310 with Cys-314. His-343 lines the Zn(2+) pocket.

The protein belongs to the peptidase M28 family. M28E subfamily. As to quaternary structure, monomer. Zn(2+) serves as cofactor.

Its subcellular location is the secreted. Calcium, magnesium and manganese cations reduce peptidase activity to 20.3-51.3 percent. The metal ion chelating reagent EDTA almost completely inhibits activity. The protease inhibitor bacitracin and the aminopeptidase B inhibitor bestatin, as well as DTT and beta-mercaptoethanol act also as lap A inhibitorsD. Its function is as follows. Extracellular aminopeptidase that allows assimilation of proteinaceous substrates. This is Leucine aminopeptidase A (lapA) from Aspergillus oryzae (strain ATCC 42149 / RIB 40) (Yellow koji mold).